The sequence spans 284 residues: Undecaprenyl-diphosphatase (284 aa).

Transmembrane regions (helical) follow at residues isoleucine 7–leucine 27, glutamate 44–histidine 64, leucine 90–aspartate 110, phenylalanine 116–isoleucine 136, valine 167–isoleucine 187, phenylalanine 197–phenylalanine 217, phenylalanine 229–phenylalanine 249, and phenylalanine 259–phenylalanine 279.

It belongs to the UppP family.

The protein localises to the cell membrane. The enzyme catalyses di-trans,octa-cis-undecaprenyl diphosphate + H2O = di-trans,octa-cis-undecaprenyl phosphate + phosphate + H(+). In terms of biological role, catalyzes the dephosphorylation of undecaprenyl diphosphate (UPP). Confers resistance to bacitracin. In Lactococcus lactis subsp. cremoris (strain MG1363), this protein is Undecaprenyl-diphosphatase.